A 79-amino-acid polypeptide reads, in one-letter code: DNA-directed RNA polymerase subunit omega (79 aa).

The protein belongs to the RNA polymerase subunit omega family. In terms of assembly, the RNAP catalytic core consists of 2 alpha, 1 beta, 1 beta' and 1 omega subunit. When a sigma factor is associated with the core the holoenzyme is formed, which can initiate transcription.

The enzyme catalyses RNA(n) + a ribonucleoside 5'-triphosphate = RNA(n+1) + diphosphate. Its function is as follows. Promotes RNA polymerase assembly. Latches the N- and C-terminal regions of the beta' subunit thereby facilitating its interaction with the beta and alpha subunits. The polypeptide is DNA-directed RNA polymerase subunit omega (Kosmotoga olearia (strain ATCC BAA-1733 / DSM 21960 / TBF 19.5.1)).